Here is a 240-residue protein sequence, read N- to C-terminus: Phosphatidylserine decarboxylase proenzyme (240 aa).

S209 serves as the catalytic Schiff-base intermediate with substrate; via pyruvic acid. A Pyruvic acid (Ser); by autocatalysis modification is found at S209.

This sequence belongs to the phosphatidylserine decarboxylase family. PSD-A subfamily. Heterodimer of a large membrane-associated beta subunit and a small pyruvoyl-containing alpha subunit. The cofactor is pyruvate. Post-translationally, is synthesized initially as an inactive proenzyme. Formation of the active enzyme involves a self-maturation process in which the active site pyruvoyl group is generated from an internal serine residue via an autocatalytic post-translational modification. Two non-identical subunits are generated from the proenzyme in this reaction, and the pyruvate is formed at the N-terminus of the alpha chain, which is derived from the carboxyl end of the proenzyme. The post-translation cleavage follows an unusual pathway, termed non-hydrolytic serinolysis, in which the side chain hydroxyl group of the serine supplies its oxygen atom to form the C-terminus of the beta chain, while the remainder of the serine residue undergoes an oxidative deamination to produce ammonia and the pyruvoyl prosthetic group on the alpha chain.

It is found in the cell membrane. It carries out the reaction a 1,2-diacyl-sn-glycero-3-phospho-L-serine + H(+) = a 1,2-diacyl-sn-glycero-3-phosphoethanolamine + CO2. It participates in phospholipid metabolism; phosphatidylethanolamine biosynthesis; phosphatidylethanolamine from CDP-diacylglycerol: step 2/2. Its function is as follows. Catalyzes the formation of phosphatidylethanolamine (PtdEtn) from phosphatidylserine (PtdSer). This Mycobacterium avium (strain 104) protein is Phosphatidylserine decarboxylase proenzyme.